A 350-amino-acid polypeptide reads, in one-letter code: Protein-glutamate methylesterase/protein-glutamine glutaminase 1 (350 aa).

The Response regulatory domain maps to 1 to 116 (MVVDDSAVVR…KGFLHDSAKV (116 aa)). D50 carries the 4-aspartylphosphate modification. A CheB-type methylesterase domain is found at 160 to 350 (LKTTEQLVAI…IPQAILDCSH (191 aa)). Catalysis depends on residues S172, H198, and D294.

Belongs to the CheB family. Phosphorylated by CheA. Phosphorylation of the N-terminal regulatory domain activates the methylesterase activity.

Its subcellular location is the cytoplasm. The catalysed reaction is [protein]-L-glutamate 5-O-methyl ester + H2O = L-glutamyl-[protein] + methanol + H(+). It carries out the reaction L-glutaminyl-[protein] + H2O = L-glutamyl-[protein] + NH4(+). In terms of biological role, involved in chemotaxis. Part of a chemotaxis signal transduction system that modulates chemotaxis in response to various stimuli. Catalyzes the demethylation of specific methylglutamate residues introduced into the chemoreceptors (methyl-accepting chemotaxis proteins or MCP) by CheR. Also mediates the irreversible deamidation of specific glutamine residues to glutamic acid. This chain is Protein-glutamate methylesterase/protein-glutamine glutaminase 1, found in Photobacterium profundum (strain SS9).